A 382-amino-acid polypeptide reads, in one-letter code: MTSHFSSLPAHRSYIFSLYRDVLRNIHRCCYSVELQNILTSKLNLTMKQQKGTMSSWKAHSKIKELEELNDRLINRDLPYLKELINNLSGNKINSTQPNQYVQDLKEATNLINEYHSNNSQSIETIKKMDILNRYIKTKQSKHLLPKEISNVYKESLLLPFAIHEDSIYKLNKLHNQLIRGPPRVRLTNTKAGKITIWFLRSALNKKDRQSKKLKLRIAKEKQKHQQRIDNIKTCEKYAYWALLEASWESLLNTGKLPTININKTINNLSTLDNEDININRKNNHHIKDIHVKEWIEPITYSIKQLVDKEFERKCHYENYKKIILYGKNNGLIDFFENKTKVMYARRVSRYKTVVNGLPFIIPTIPRRDLRTALLDNKVLLP.

Belongs to the RRG1 family.

The protein localises to the mitochondrion. Its function is as follows. Essential for respiratory growth and required for mitochondrial protein synthesis. Required for vacuolar acidification. The polypeptide is Required for respiratory growth protein 1, mitochondrial (RRG1) (Vanderwaltozyma polyspora (strain ATCC 22028 / DSM 70294 / BCRC 21397 / CBS 2163 / NBRC 10782 / NRRL Y-8283 / UCD 57-17) (Kluyveromyces polysporus)).